The chain runs to 105 residues: Ribonuclease P protein component 4 (105 aa).

Zn(2+) contacts are provided by Cys63, Cys66, Cys89, and Cys92.

Belongs to the eukaryotic/archaeal RNase P protein component 4 family. As to quaternary structure, consists of a catalytic RNA component and at least 4-5 protein subunits. The cofactor is Zn(2+).

It localises to the cytoplasm. The enzyme catalyses Endonucleolytic cleavage of RNA, removing 5'-extranucleotides from tRNA precursor.. Part of ribonuclease P, a protein complex that generates mature tRNA molecules by cleaving their 5'-ends. The protein is Ribonuclease P protein component 4 of Methanoculleus marisnigri (strain ATCC 35101 / DSM 1498 / JR1).